A 384-amino-acid polypeptide reads, in one-letter code: S-adenosylmethionine synthase (384 aa).

H15 is a binding site for ATP. D17 provides a ligand contact to Mg(2+). Residue E43 coordinates K(+). Positions 56 and 99 each coordinate L-methionine. The tract at residues 99–109 (QSPDINQGVDR) is flexible loop. Residues 164–166 (DAK), 230–231 (RF), D239, 245–246 (RK), A262, and K266 contribute to the ATP site. D239 lines the L-methionine pocket. An L-methionine-binding site is contributed by K270.

It belongs to the AdoMet synthase family. As to quaternary structure, homotetramer; dimer of dimers. Requires Mg(2+) as cofactor. K(+) is required as a cofactor.

The protein localises to the cytoplasm. The enzyme catalyses L-methionine + ATP + H2O = S-adenosyl-L-methionine + phosphate + diphosphate. Its pathway is amino-acid biosynthesis; S-adenosyl-L-methionine biosynthesis; S-adenosyl-L-methionine from L-methionine: step 1/1. Catalyzes the formation of S-adenosylmethionine (AdoMet) from methionine and ATP. The overall synthetic reaction is composed of two sequential steps, AdoMet formation and the subsequent tripolyphosphate hydrolysis which occurs prior to release of AdoMet from the enzyme. In Cronobacter sakazakii (strain ATCC BAA-894) (Enterobacter sakazakii), this protein is S-adenosylmethionine synthase.